Consider the following 527-residue polypeptide: Probable guanine deaminase (527 aa).

Residues H79 and H81 each coordinate Zn(2+). Residues 81–84 (HAPQ), 212–213 (RF), 239–242 (HISE), and D329 contribute to the substrate site. Positions 239 and 329 each coordinate Zn(2+).

The protein belongs to the metallo-dependent hydrolases superfamily. ATZ/TRZ family. Zn(2+) is required as a cofactor.

The enzyme catalyses guanine + H2O + H(+) = xanthine + NH4(+). Its pathway is purine metabolism; guanine degradation; xanthine from guanine: step 1/1. In terms of biological role, catalyzes the hydrolytic deamination of guanine, producing xanthine and ammonia. The polypeptide is Probable guanine deaminase (Schizosaccharomyces pombe (strain 972 / ATCC 24843) (Fission yeast)).